Consider the following 547-residue polypeptide: Chaperonin GroEL (547 aa).

ATP contacts are provided by residues 30–33 (TLGP), Lys-51, 87–91 (DGTTT), Gly-415, and Asp-495.

It belongs to the chaperonin (HSP60) family. In terms of assembly, forms a cylinder of 14 subunits composed of two heptameric rings stacked back-to-back. Interacts with the co-chaperonin GroES.

The protein localises to the cytoplasm. It carries out the reaction ATP + H2O + a folded polypeptide = ADP + phosphate + an unfolded polypeptide.. In terms of biological role, together with its co-chaperonin GroES, plays an essential role in assisting protein folding. The GroEL-GroES system forms a nano-cage that allows encapsulation of the non-native substrate proteins and provides a physical environment optimized to promote and accelerate protein folding. The polypeptide is Chaperonin GroEL (Pasteurella multocida (strain Pm70)).